The chain runs to 321 residues: Sporulation protein cse15 (321 aa).

2 coiled-coil regions span residues 37 to 70 (FHQK…TKEK) and 108 to 205 (IEEK…KEKL). 2 stretches are compositionally biased toward basic and acidic residues: residues 234-243 (GTKQKEKTEE) and 282-293 (AKSHTIEELKNR). Disordered stretches follow at residues 234-253 (GTKQ…AQPN) and 274-293 (AHAQ…LKNR).

The polypeptide is Sporulation protein cse15 (cse15) (Bacillus subtilis (strain 168)).